The following is a 1319-amino-acid chain: ERAD-associated E3 ubiquitin-protein ligase DOA10 (1319 aa).

Met-1 carries the post-translational modification N-acetylmethionine. Over Met-1 to Ala-131 the chain is Cytoplasmic. The segment at Asp-31–Lys-100 adopts an RING-CH-type zinc-finger fold. Zn(2+) is bound by residues Cys-39, Cys-42, Cys-56, Cys-58, His-66, Cys-69, Cys-90, and Cys-93. The helical transmembrane segment at Leu-132 to Phe-152 threads the bilayer. Residues Gly-153 to Ser-203 are Lumenal-facing. Residues Leu-204–Val-224 form a helical membrane-spanning segment. Over Arg-225–Lys-468 the chain is Cytoplasmic. A compositionally biased stretch (low complexity) spans Ala-291 to Pro-306. Disordered stretches follow at residues Ala-291 to Asn-315 and Glu-329 to Tyr-381. A helical transmembrane segment spans residues Leu-469 to Ile-489. The Lumenal portion of the chain corresponds to Ser-490–Tyr-491. A helical membrane pass occupies residues Leu-492–Ile-512. Residues Leu-513 to Val-626 lie on the Cytoplasmic side of the membrane. Residues Phe-627–Phe-647 traverse the membrane as a helical segment. The Lumenal portion of the chain corresponds to Ser-648 to Met-660. The helical transmembrane segment at Leu-661–Ile-681 threads the bilayer. Topologically, residues Gly-682–Met-739 are cytoplasmic. A helical transmembrane segment spans residues Phe-740–Phe-760. Over Met-761–Ser-777 the chain is Lumenal. Residues Ile-778–Leu-797 traverse the membrane as a helical segment. At Glu-798–Tyr-965 the chain is on the cytoplasmic side. A helical transmembrane segment spans residues Met-966–Ile-986. Over Ser-987–Glu-1019 the chain is Lumenal. The helical transmembrane segment at Leu-1020–Leu-1040 threads the bilayer. Residues Ser-1041–Asn-1113 lie on the Cytoplasmic side of the membrane. The helical transmembrane segment at Leu-1114–Leu-1134 threads the bilayer. The Lumenal portion of the chain corresponds to Thr-1135 to Ser-1168. The chain crosses the membrane as a helical span at residues Leu-1169–Leu-1189. The Cytoplasmic segment spans residues Lys-1190–Lys-1213. The helical transmembrane segment at Gln-1214–Leu-1234 threads the bilayer. Residues Arg-1235–Tyr-1270 lie on the Lumenal side of the membrane. Residues Phe-1271–Ile-1291 traverse the membrane as a helical segment. Topologically, residues Gln-1292 to Ser-1319 are cytoplasmic.

The protein belongs to the DOA10/MARCH6 family. As to quaternary structure, component of the DOA10 ubiquitin ligase complex which contains E3 ligase SSM4/DOA10 and CDC48-binding protein UBX2/SEL1. The DOA10 complex interacts with the heterotrimeric CDC48-NPL4-UFD1 ATPase complex which is recruited by UBX2/SEL1 via its interaction with CDC48. Interacts with its associated ubiquitin conjugating enzymes UBC6 and UBC7 with its membrane anchor CUE1. Interacts with PEX29.

It localises to the endoplasmic reticulum membrane. It is found in the nucleus inner membrane. The enzyme catalyses S-ubiquitinyl-[E2 ubiquitin-conjugating enzyme]-L-cysteine + [acceptor protein]-L-lysine = [E2 ubiquitin-conjugating enzyme]-L-cysteine + N(6)-ubiquitinyl-[acceptor protein]-L-lysine.. The protein operates within protein modification; protein ubiquitination. Functionally, E3 ubiquitin-protein ligase which accepts ubiquitin specifically from endoplasmic reticulum-associated UBC6 and UBC7 E2 ligases, and transfers it to substrates promoting their degradation. Mediates the degradation of a broad range of substrates, including endoplasmic reticulum membrane proteins (ERQC), soluble nuclear proteins and soluble cytoplasmic proteins (CytoQC). Component of the DOA10 ubiquitin ligase complex, which is part of the ERAD-C pathway responsible for the rapid degradation of membrane proteins with misfolded cytoplasmic domains. ERAD-C substrates are ubiquitinated through DOA10 in conjunction with the E2 ubiquitin-conjugating enzymes UBC6 and UBC7-CUE1. Ubiquitinated substrates are then removed to the cytosol via the action of the UFD1-NPL4-CDC48/p97 (UNC) AAA ATPase complex and targeted to the proteasome. Also recognizes the N-terminally acetylated residue of proteins as degradation signal (degron). N-terminally acetylated target proteins include MATALPHA2, TBF1, SLK19, YMR090W, HIS3, HSP104, UBP6 and ARO8. Catalyzes ubiquitination of mislocalized tail-anchored proteins that are extracted from the mitochondrion membrane by MSP1: following extraction, mistargeted proteins are transferred to the endoplasmic reticulum, where they are ubiquitinated by DOA10 and degraded by the proteasome. The sequence is that of ERAD-associated E3 ubiquitin-protein ligase DOA10 (SSM4) from Saccharomyces cerevisiae (strain ATCC 204508 / S288c) (Baker's yeast).